We begin with the raw amino-acid sequence, 473 residues long: MDNFKHLPEPFRIRVIEPVKRTTREYREEAILKAGMNPFLLDSEDVFIDLLTDSGTGAITQDMQAAMFRGDEAYSGSRSYHALANAVKDIFGYEFTIPTHQGRGAEQIYIPVLIKKREIEKGLDRSKMVALSNYFFDTTQGHTQINCCVAKNVYTEEAFDTGVKADFKGNFDLEKLEEAILEAGPANVPYIVSTITCNSAGGQPVSLANLKAVYEIAKRYDIPVIMDSARFAENAYFIQQREKDYQNWSIEEITRESYKYADGLAMSAKKDAMVQMGGLLCFKDESFLDVYTECRTLCVVQEGFPTYGGLEGGAMERLAVGLYDGMRQDWLAYRINQVEYLVNGLESIGVVCQQAGGHAAFVDAGKLLPHIPADQFPAHALACELYKVAGIRAVEIGSLLLGRDPATGKQHPCPAELLRLTIPRATYTQTHMDFIIEAFGKVKANAANVKGLEFTYEPQVLRHFTARLKEIDA.

The residue at position 270 (K270) is an N6-(pyridoxal phosphate)lysine.

It belongs to the beta-eliminating lyase family. In terms of assembly, homotetramer. The cofactor is pyridoxal 5'-phosphate.

The enzyme catalyses L-tryptophan + H2O = indole + pyruvate + NH4(+). It participates in amino-acid degradation; L-tryptophan degradation via pyruvate pathway; indole and pyruvate from L-tryptophan: step 1/1. This Vibrio vulnificus (strain CMCP6) protein is Tryptophanase.